Reading from the N-terminus, the 451-residue chain is Charged multivesicular body protein 7 (451 aa).

Residues 1-22 are disordered; the sequence is MWSPEREAQAPTGGDPAGLLPP. A Phosphoserine modification is found at serine 232. Residues 248-312 are a coiled coil; that stretch reads EQLLSRKVES…DTVQGILDRI (65 aa). Threonine 409 is modified (phosphothreonine). Serine 411, serine 432, and serine 442 each carry phosphoserine. A disordered region spans residues 431 to 451; sequence LSEGGLIPSSKSPKRQLEPTL.

It belongs to the SNF7 family. In terms of assembly, interacts with CHMP4B, but not with VPS25. Interacts with LEMD2 (via C-terminus).

The protein resides in the cytoplasm. The protein localises to the nucleus envelope. Its function is as follows. ESCRT-III-like protein required to recruit the ESCRT-III complex to the nuclear envelope (NE) during late anaphase. Together with SPAST, the ESCRT-III complex promotes NE sealing and mitotic spindle disassembly during late anaphase. Recruited to the reforming NE during anaphase by LEMD2. Plays a role in the endosomal sorting pathway. The polypeptide is Charged multivesicular body protein 7 (Chmp7) (Mus musculus (Mouse)).